We begin with the raw amino-acid sequence, 288 residues long: ATP synthase gamma chain (288 aa).

The protein belongs to the ATPase gamma chain family. F-type ATPases have 2 components, CF(1) - the catalytic core - and CF(0) - the membrane proton channel. CF(1) has five subunits: alpha(3), beta(3), gamma(1), delta(1), epsilon(1). CF(0) has three main subunits: a, b and c.

The protein localises to the cell inner membrane. Produces ATP from ADP in the presence of a proton gradient across the membrane. The gamma chain is believed to be important in regulating ATPase activity and the flow of protons through the CF(0) complex. This is ATP synthase gamma chain from Legionella pneumophila (strain Corby).